The chain runs to 73 residues: Translation initiation factor IF-1 (73 aa).

Residues 1–73 (MPKKDGVIEI…SRGRIVYRYK (73 aa)) enclose the S1-like domain.

The protein belongs to the IF-1 family. As to quaternary structure, component of the 30S ribosomal translation pre-initiation complex which assembles on the 30S ribosome in the order IF-2 and IF-3, IF-1 and N-formylmethionyl-tRNA(fMet); mRNA recruitment can occur at any time during PIC assembly.

The protein localises to the cytoplasm. In terms of biological role, one of the essential components for the initiation of protein synthesis. Stabilizes the binding of IF-2 and IF-3 on the 30S subunit to which N-formylmethionyl-tRNA(fMet) subsequently binds. Helps modulate mRNA selection, yielding the 30S pre-initiation complex (PIC). Upon addition of the 50S ribosomal subunit IF-1, IF-2 and IF-3 are released leaving the mature 70S translation initiation complex. The sequence is that of Translation initiation factor IF-1 from Kineococcus radiotolerans (strain ATCC BAA-149 / DSM 14245 / SRS30216).